The sequence spans 220 residues: tRNA (guanine-N(7)-)-methyltransferase (220 aa).

The S-adenosyl-L-methionine site is built by Glu46, Asp71, Asp100, and Asp122. Residue Asp122 is part of the active site. Residues Lys126, Asp158, and 196–199 (TEYE) each bind substrate.

This sequence belongs to the class I-like SAM-binding methyltransferase superfamily. TrmB family.

The enzyme catalyses guanosine(46) in tRNA + S-adenosyl-L-methionine = N(7)-methylguanosine(46) in tRNA + S-adenosyl-L-homocysteine. It functions in the pathway tRNA modification; N(7)-methylguanine-tRNA biosynthesis. Functionally, catalyzes the formation of N(7)-methylguanine at position 46 (m7G46) in tRNA. This is tRNA (guanine-N(7)-)-methyltransferase from Malacoplasma penetrans (strain HF-2) (Mycoplasma penetrans).